The sequence spans 86 residues: Testis-expressed protein 54 (86 aa).

Residues 1 to 34 (MGCCQDKNRWASDEQARDEVTEDGREGNEVDNSG) show a composition bias toward basic and acidic residues. Disordered regions lie at residues 1–43 (MGCC…SNES) and 57–86 (SRRE…PEKG).

Expressed in Testis.

This is Testis-expressed protein 54 from Mus musculus (Mouse).